A 605-amino-acid polypeptide reads, in one-letter code: Terpenoid synthase 18 (605 aa).

Residues Asp-356, Asp-360, Asn-500, Thr-504, and Glu-508 each contribute to the Mg(2+) site. The DDXXD motif signature appears at 356–360 (DDTYD).

This sequence belongs to the terpene synthase family. Tpsa subfamily. Mg(2+) is required as a cofactor. The cofactor is Mn(2+). In terms of tissue distribution, predominantly expressed in flowers and siliques but also in roots and leaves.

Its subcellular location is the cytoplasm. It participates in secondary metabolite biosynthesis; terpenoid biosynthesis. The polypeptide is Terpenoid synthase 18 (TPS18) (Arabidopsis thaliana (Mouse-ear cress)).